A 919-amino-acid polypeptide reads, in one-letter code: Calcium-activated chloride channel regulator 4 (919 aa).

An N-terminal signal peptide occupies residues 1–21 (MGLFRGFVFLLVLCLLHQSNT). The segment at 45–199 (DEKIIEQIED…GISGRNRVYK (155 aa)) is metalloprotease domain. Asn75 carries an N-linked (GlcNAc...) asparagine glycan. His155 is a Zn(2+) binding site. Glu156 is a catalytic residue. Positions 159 and 166 each coordinate Zn(2+). Residues 306-476 (IVCLVLDKSG…NGLIDAFGAL (171 aa)) form the VWFA domain. Residues Asn340, Asn504, Asn542, Asn588, Asn628, Asn811, Asn832, Asn837, and Asn852 are each glycosylated (N-linked (GlcNAc...) asparagine). Positions 870 to 893 (ANPDDIDPTPTPTPTPTPDKSHNS) are disordered. A helical membrane pass occupies residues 895 to 915 (VNISTLVLSVIGSVVIVNFIL).

This sequence belongs to the CLCR family. The translation product is autoproteolytically cleaved by the metalloprotease domain in the endoplasmic reticulum into a N-terminal and a C-terminal products that remain physically associated with each other. The cleavage is necessary for calcium-activated chloride channel (CaCC) activation activity. As to expression, primarily expressed in the digestive tract, mainly in colon. Detected in smaller amounts in brain, urogenital organs, testis, and salivary and mammary glands. Highly expressed in the epithelial layer and submucosal gland of the inferior turbinate mucosa. Lower levels in the epithelial layer of nasal polyp.

The protein resides in the cell membrane. Its subcellular location is the apical cell membrane. It is found in the secreted. Functionally, may be involved in mediating calcium-activated chloride conductance. In Homo sapiens (Human), this protein is Calcium-activated chloride channel regulator 4 (CLCA4).